A 654-amino-acid polypeptide reads, in one-letter code: Hepatocyte growth factor activator serine proteases (654 aa).

The first 33 residues, 1 to 33 (MGRWAWGPSLCPLPGMALLLLLLLLLVPHGAQP), serve as a signal peptide directing secretion. The disordered stretch occupies residues 34–100 (QAGGNLTEPP…SSSPGDPVLT (67 aa)). Residues 34-370 (QAGGNLTEPP…RLAACESLAR (337 aa)) constitute a propeptide, removed in mature form. N38 and N46 each carry an N-linked (GlcNAc...) asparagine glycan. The segment covering 57-81 (PVTSVTPVTPATSAPEAQGPRGRGL) has biased composition (low complexity). Positions 101–148 (VDGQPCRFPFRYGGRMLHACTSEGSAHRKWCATTHNYDRDRAWGYCVQ) constitute a Fibronectin type-II domain. Disulfide bonds link C106-C131, C120-C146, C162-C173, C167-C184, C186-C195, C200-C228, C226-C235, C243-C254, C248-C265, C267-C276, C284-C365, C305-C347, C336-C360, C393-C520, C431-C447, C439-C509, C534-C603, C566-C582, and C593-C621. An EGF-like 1 domain is found at 158–196 (ALDSCASSPCLNGGSCSHTQDPGSYHCTCPMAFTGRNCD). Residues 198–238 (EKCFDETRYEHLEAGDRWARVSQGQVEQCECAGGQIRCEGT) enclose the Fibronectin type-I domain. In terms of domain architecture, EGF-like 2 spans 239-277 (RHTACLSSPCLNGGTCHLIVATGTTVCSCPPGHAGRLCN). One can recognise a Kringle domain in the interval 283 to 365 (RCFVGNGTEY…SWEYCRLAAC (83 aa)). A glycan (N-linked (GlcNAc...) asparagine) is linked at N288. In terms of domain architecture, Peptidase S1 spans 407–645 (IIGGSSSLPG…YVDWIKDRIW (239 aa)). H446 functions as the Charge relay system in the catalytic mechanism. 2 N-linked (GlcNAc...) asparagine glycosylation sites follow: N467 and N491. D496 acts as the Charge relay system in catalysis. A glycan (N-linked (GlcNAc...) asparagine) is linked at N545. Catalysis depends on S597, which acts as the Charge relay system.

Belongs to the peptidase S1 family. Heterodimer of a short chain and a long chain linked by a disulfide bond. In terms of processing, the active form of HGFAC presents in the serum is derived from the COOH-terminal region of the precursor by the cleavage of bonds between Arg-370 and Ile-371 and Arg-406 and Ile-407. In terms of tissue distribution, liver.

The protein resides in the secreted. Serine protease that hydrolyzes the inactive zymogen hepatocyte growth factor (HGFsc) to an activated disulfide-linked heterodimer, then initiating hepatocyte growth factor receptor signaling pathway. In Canis lupus familiaris (Dog), this protein is Hepatocyte growth factor activator serine proteases (HGFAC).